A 276-amino-acid chain; its full sequence is Nuclear egress protein 2 (276 aa).

The Perinuclear space portion of the chain corresponds to 1 to 245; sequence MANVLKEKMY…FWRLSERHCR (245 aa). Residues 246 to 264 traverse the membrane as a helical segment; that stretch reads FALVGICFLLALYFCYVLL. Over 265 to 276 the chain is Nuclear; it reads KKTPTPASGSVV.

This sequence belongs to the herpesviridae NEC2 protein family. As to quaternary structure, forms a heterohexameric complex with NEC1. In terms of processing, phosphorylated.

The protein resides in the host nucleus inner membrane. Plays an essential role in virion nuclear egress, the first step of virion release from infected cell. Within the host nucleus, NEC1 interacts with the newly formed capsid through the vertexes and directs it to the inner nuclear membrane by associating with NEC2. Induces the budding of the capsid at the inner nuclear membrane as well as its envelopment into the perinuclear space. There, the NEC1/NEC2 complex promotes the fusion of the enveloped capsid with the outer nuclear membrane and the subsequent release of the viral capsid into the cytoplasm where it will reach the secondary budding sites in the host Golgi or trans-Golgi network. This Homo sapiens (Human) protein is Nuclear egress protein 2.